Here is a 232-residue protein sequence, read N- to C-terminus: Orotidine 5'-phosphate decarboxylase (232 aa).

Residues D11, K33, 60–69 (DLKFHDIPNT), T120, R181, Q190, G210, and R211 contribute to the substrate site. K62 acts as the Proton donor in catalysis.

This sequence belongs to the OMP decarboxylase family. Type 1 subfamily. As to quaternary structure, homodimer.

The enzyme catalyses orotidine 5'-phosphate + H(+) = UMP + CO2. The protein operates within pyrimidine metabolism; UMP biosynthesis via de novo pathway; UMP from orotate: step 2/2. Functionally, catalyzes the decarboxylation of orotidine 5'-monophosphate (OMP) to uridine 5'-monophosphate (UMP). This is Orotidine 5'-phosphate decarboxylase from Vibrio vulnificus (strain CMCP6).